We begin with the raw amino-acid sequence, 122 residues long: Large-conductance mechanosensitive channel (122 aa).

Helical transmembrane passes span 14–34 (VLDL…VKSL) and 67–87 (GAFL…FILI).

It belongs to the MscL family. As to quaternary structure, homopentamer.

Its subcellular location is the cell membrane. Channel that opens in response to stretch forces in the membrane lipid bilayer. May participate in the regulation of osmotic pressure changes within the cell. This is Large-conductance mechanosensitive channel from Lactococcus lactis subsp. lactis (strain IL1403) (Streptococcus lactis).